A 282-amino-acid polypeptide reads, in one-letter code: TPR repeat protein oca3 (282 aa).

TPR repeat units lie at residues 16–50, 71–104, 139–172, and 174–211; these read IVAL…ALTT, PRVE…DPTH, LEAW…QPFE, and RLFA…CEEY.

It is found in the cytoplasm. Its subcellular location is the nucleus. In terms of biological role, may be involved in cell cycle regulation. This chain is TPR repeat protein oca3 (oca3), found in Schizosaccharomyces pombe (strain 972 / ATCC 24843) (Fission yeast).